The chain runs to 661 residues: UvrABC system protein B (661 aa).

The Helicase ATP-binding domain maps to 23-180; that stretch reads EGLQKGYRIQ…THLARIGYER (158 aa). 36–43 contributes to the ATP binding site; that stretch reads GVTGSGKT. The Beta-hairpin signature appears at 89–112; the sequence is YYDYYQPEAYIPTRDLYIEKNADI. The Helicase C-terminal domain occupies 426 to 592; it reads QIDDLVNEIA…TIIKPLDEEI (167 aa). The UVR domain maps to 620–655; that stretch reads EEYIALLEEEMYKAASELRYEDAARLRDELFNIREK.

This sequence belongs to the UvrB family. As to quaternary structure, forms a heterotetramer with UvrA during the search for lesions. Interacts with UvrC in an incision complex.

The protein resides in the cytoplasm. Functionally, the UvrABC repair system catalyzes the recognition and processing of DNA lesions. A damage recognition complex composed of 2 UvrA and 2 UvrB subunits scans DNA for abnormalities. Upon binding of the UvrA(2)B(2) complex to a putative damaged site, the DNA wraps around one UvrB monomer. DNA wrap is dependent on ATP binding by UvrB and probably causes local melting of the DNA helix, facilitating insertion of UvrB beta-hairpin between the DNA strands. Then UvrB probes one DNA strand for the presence of a lesion. If a lesion is found the UvrA subunits dissociate and the UvrB-DNA preincision complex is formed. This complex is subsequently bound by UvrC and the second UvrB is released. If no lesion is found, the DNA wraps around the other UvrB subunit that will check the other stand for damage. The polypeptide is UvrABC system protein B (Thermosipho africanus (strain TCF52B)).